A 281-amino-acid chain; its full sequence is Bis(5'-nucleosyl)-tetraphosphatase, symmetrical (281 aa).

The protein belongs to the Ap4A hydrolase family.

It catalyses the reaction P(1),P(4)-bis(5'-adenosyl) tetraphosphate + H2O = 2 ADP + 2 H(+). Hydrolyzes diadenosine 5',5'''-P1,P4-tetraphosphate to yield ADP. This is Bis(5'-nucleosyl)-tetraphosphatase, symmetrical from Acidovorax sp. (strain JS42).